Reading from the N-terminus, the 20-residue chain is Pregnancy-associated glycoprotein 57 (20 aa).

The protein belongs to the peptidase A1 family. In terms of processing, glycosylated.

It is found in the secreted. In Ovis aries (Sheep), this protein is Pregnancy-associated glycoprotein 57.